Here is a 91-residue protein sequence, read N- to C-terminus: Acylphosphatase (91 aa).

One can recognise an Acylphosphatase-like domain in the interval 3–91 (CLRAIVKGKV…ANYSDFRIKH (89 aa)). Catalysis depends on residues Arg18 and Asn36.

This sequence belongs to the acylphosphatase family.

It carries out the reaction an acyl phosphate + H2O = a carboxylate + phosphate + H(+). The chain is Acylphosphatase (acyP) from Dehalococcoides mccartyi (strain ATCC BAA-2100 / JCM 16839 / KCTC 5957 / BAV1).